The following is a 262-amino-acid chain: 5'-nucleotidase SurE (262 aa).

A divalent metal cation is bound by residues Asp8, Asp9, Ser41, and Asn97.

This sequence belongs to the SurE nucleotidase family. A divalent metal cation is required as a cofactor.

The protein localises to the cytoplasm. The catalysed reaction is a ribonucleoside 5'-phosphate + H2O = a ribonucleoside + phosphate. Its function is as follows. Nucleotidase that shows phosphatase activity on nucleoside 5'-monophosphates. This is 5'-nucleotidase SurE from Methanococcus maripaludis (strain DSM 14266 / JCM 13030 / NBRC 101832 / S2 / LL).